The sequence spans 275 residues: Putative methylglyoxal reductase DkgA (275 aa).

The active-site Proton donor is Y51. H107 is a binding site for substrate. 187–241 (SPLAQGGEGVFDQKVIRELADKYGKTPAQIVIRWHLDCGLVVIPKSVTPSRIAEN) is a binding site for NADP(+).

Belongs to the aldo/keto reductase family. In terms of assembly, monomer.

It is found in the cytoplasm. It catalyses the reaction hydroxyacetone + NADP(+) = methylglyoxal + NADPH + H(+). Aldo-keto reductase that significantly contributes to cellular methylglyoxal detoxification by catalyzing the NADPH-dependent conversion of methylglyoxal to acetol. The sequence is that of Putative methylglyoxal reductase DkgA from Salmonella typhi.